The chain runs to 714 residues: Solute carrier family 12 member 8 (714 aa).

A run of 6 helical transmembrane segments spans residues 37 to 60 (VLFGTWDGVFTSCMINIFGVVLFL), 72 to 93 (LLGMFLVSFVILVALVTVLSGI), 99 to 116 (SSIGSGGVYSMISSVLGG), 123 to 142 (GLLYVFGQCVAGAMYITGFA), 154 to 173 (IWAVRGISVAVLLALLGINL), and 185 to 205 (LLLFLLAVSTLDFVVGSFTHL). Residue N221 is glycosylated (N-linked (GlcNAc...) asparagine). The next 5 membrane-spanning stretches (helical) occupy residues 233–254 (FFTVFGVFFPAATGVMAGFNMG), 266–289 (LGSLAAVGISWFLYIIFVFLLGAI), 309–331 (GFLFLLGLYISSLASCMGGLYGA), 360–377 (PVAAICLTSLVTMAFVFV), and 383–403 (LAPIVTINFMLTYVAVDYSYF). Disordered regions lie at residues 471–503 (KLESSQPRQGEGNRTPESQKRKSKKATKQTLQD) and 530–550 (GQESCWNKQTSKSEGTQPEGT). The segment covering 533–548 (SCWNKQTSKSEGTQPE) has biased composition (polar residues). A run of 2 helical transmembrane segments spans residues 593–616 (CNPWVSLLGAVGSLLIMFVIQWVY) and 622–643 (GVAAIVYFYIGRASPGLHLGSA).

This sequence belongs to the SLC12A transporter family. In terms of tissue distribution, ubiquitous with very low level in normal skin.

The protein localises to the membrane. In terms of biological role, cation/chloride cotransporter that may play a role in the control of keratinocyte proliferation. The polypeptide is Solute carrier family 12 member 8 (SLC12A8) (Homo sapiens (Human)).